The sequence spans 461 residues: Putative dipeptidase CPSG_01350 (461 aa).

The span at 1 to 10 (MSARDNEKGS) shows a compositional bias: basic and acidic residues. The tract at residues 1 to 31 (MSARDNEKGSARSQPSHAAASEIENVPRPSR) is disordered. The helical transmembrane segment at 35–52 (WTGTMIKVFIICACAGIV) threads the bilayer. Residues His90, Asp92, and Glu203 each contribute to the Zn(2+) site. Cys142 and Cys232 form a disulfide bridge. His230 is a substrate binding site. His274 and His295 together coordinate Zn(2+). Substrate-binding residues include Arg306 and Asp366. Asn379 is a glycosylation site (N-linked (GlcNAc...) asparagine).

Belongs to the metallo-dependent hydrolases superfamily. Peptidase M19 family. Zn(2+) serves as cofactor.

It is found in the membrane. The enzyme catalyses an L-aminoacyl-L-amino acid + H2O = 2 an L-alpha-amino acid. Its function is as follows. Hydrolyzes a wide range of dipeptides. This is Putative dipeptidase CPSG_01350 from Coccidioides posadasii (strain RMSCC 757 / Silveira) (Valley fever fungus).